The chain runs to 472 residues: Argininosuccinate lyase (472 aa).

Belongs to the lyase 1 family. Argininosuccinate lyase subfamily.

The protein resides in the cytoplasm. The catalysed reaction is 2-(N(omega)-L-arginino)succinate = fumarate + L-arginine. Its pathway is amino-acid biosynthesis; L-arginine biosynthesis; L-arginine from L-ornithine and carbamoyl phosphate: step 3/3. The polypeptide is Argininosuccinate lyase (Mycolicibacterium paratuberculosis (strain ATCC BAA-968 / K-10) (Mycobacterium paratuberculosis)).